The primary structure comprises 610 residues: F-box/LRR-repeat protein 4 (610 aa).

In terms of domain architecture, F-box spans D5 to I52. 19 LRR repeats span residues G53–E79, S124–W149, C150–G175, V178–F200, C201–A227, S228–S253, I256–Q277, C278–S303, F304–D329, C330–G355, C356–Y381, C382–D407, C408–R433, C434–F459, C460–G484, C485–V510, L511–H536, C537–Y562, and C563–K588. Positions L88 to S125 are disordered.

The protein is F-box/LRR-repeat protein 4 (FBL4) of Arabidopsis thaliana (Mouse-ear cress).